The sequence spans 196 residues: Putative 3-methyladenine DNA glycosylase (196 aa).

It belongs to the DNA glycosylase MPG family.

The polypeptide is Putative 3-methyladenine DNA glycosylase (Chlorobium phaeovibrioides (strain DSM 265 / 1930) (Prosthecochloris vibrioformis (strain DSM 265))).